The following is a 473-amino-acid chain: tRNA-2-methylthio-N(6)-dimethylallyladenosine synthase (473 aa).

Positions 5 to 125 constitute an MTTase N-terminal domain; it reads RKLHIKSYGC…LPQLLARADQ (121 aa). Residues C14, C50, C88, C166, C170, and C173 each contribute to the [4Fe-4S] cluster site. Residues 152–384 form the Radical SAM core domain; sequence RARGISAFVT…QQLIDSQQSA (233 aa). Residues 387–459 enclose the TRAM domain; sequence KAAIGQTVDV…RYSLLGELAA (73 aa).

This sequence belongs to the methylthiotransferase family. MiaB subfamily. In terms of assembly, monomer. It depends on [4Fe-4S] cluster as a cofactor.

It localises to the cytoplasm. It catalyses the reaction N(6)-dimethylallyladenosine(37) in tRNA + (sulfur carrier)-SH + AH2 + 2 S-adenosyl-L-methionine = 2-methylsulfanyl-N(6)-dimethylallyladenosine(37) in tRNA + (sulfur carrier)-H + 5'-deoxyadenosine + L-methionine + A + S-adenosyl-L-homocysteine + 2 H(+). Its function is as follows. Catalyzes the methylthiolation of N6-(dimethylallyl)adenosine (i(6)A), leading to the formation of 2-methylthio-N6-(dimethylallyl)adenosine (ms(2)i(6)A) at position 37 in tRNAs that read codons beginning with uridine. In Rhodopseudomonas palustris (strain BisB5), this protein is tRNA-2-methylthio-N(6)-dimethylallyladenosine synthase.